The primary structure comprises 361 residues: MYKLLGGLKEYLKWQDIVTDNAIFRLHNLFTTVLLLTCSLIITATQYVGNPIHCIVNGLPVRPINTYCWITSTFTMPDAFLRQVGSEVAHPGVANDFGDEDAKKYYTYYQWVCFVLFFQAMLCYTPKWIWDSIEGGLLRTLIMGLNRGLCQDDEKCMKKKALIEYLLRHIKRHNMYALKYWFCETLCLVNIIGQLYLMNHFFDGEFFSYGLRVVAFSEQSQEERVDPMVYVFPRVTKCTFHKYGASGSIQKHDSLCVLPLNIVNEKTYIFLWFWYIILAALLSVLVVYRAVILAVPSVRPILLHARNRMVPKEVTNAICRKTDVGDWWILYMLGRNMDPMIYGEVIADLAKKIETPSSNNP.

Residues M1 to N28 lie on the Cytoplasmic side of the membrane. The helical transmembrane segment at L29–G49 threads the bilayer. The Extracellular segment spans residues N50–Y109. A helical membrane pass occupies residues Q110 to W130. At D131–W181 the chain is on the cytoplasmic side. The helical transmembrane segment at F182–F202 threads the bilayer. The Extracellular portion of the chain corresponds to D203 to T267. A helical membrane pass occupies residues Y268–Y288. The Cytoplasmic segment spans residues R289–P361.

Belongs to the pannexin family. Expressed in embryonic neural precursors including the dorsal median neuroblast, glial cells, neuropilar glial ring, developing myoblasts cells and in a circumferential band of epithelial cells at the trochanter/coxa boundary stripe in the developing limb.

Its subcellular location is the cell membrane. The protein localises to the cell junction. It is found in the gap junction. Structural components of the gap junctions. The sequence is that of Innexin inx1 (inx1) from Schistocerca americana (American grasshopper).